A 184-amino-acid chain; its full sequence is NADH-quinone oxidoreductase subunit B (184 aa).

Positions 63, 64, 128, and 158 each coordinate [4Fe-4S] cluster.

Belongs to the complex I 20 kDa subunit family. NDH-1 is composed of 14 different subunits. Subunits NuoB, C, D, E, F, and G constitute the peripheral sector of the complex. [4Fe-4S] cluster serves as cofactor.

The protein localises to the cell inner membrane. It carries out the reaction a quinone + NADH + 5 H(+)(in) = a quinol + NAD(+) + 4 H(+)(out). NDH-1 shuttles electrons from NADH, via FMN and iron-sulfur (Fe-S) centers, to quinones in the respiratory chain. The immediate electron acceptor for the enzyme in this species is believed to be ubiquinone. Couples the redox reaction to proton translocation (for every two electrons transferred, four hydrogen ions are translocated across the cytoplasmic membrane), and thus conserves the redox energy in a proton gradient. The protein is NADH-quinone oxidoreductase subunit B of Xylella fastidiosa (strain M23).